Consider the following 1231-residue polypeptide: ATP-dependent RNA helicase DHX30 (1231 aa).

Residues 39–65 (PDGLEGARQEDEEEQPPPPGAEEQSTA) form a disordered region. DRBM domains follow at residues 80 to 148 (PKNL…CQLF) and 292 to 359 (PKNL…CQKL). The 169-residue stretch at 488 to 656 (LSAIEQNPVV…FGGCPVVKVP (169 aa)) folds into the Helicase ATP-binding domain. 501 to 508 (GDTGCGKT) is a binding site for ATP. A DEAH box motif is present at residues 603–606 (DEVH). Residues 697 to 870 (LITDLVLQID…NLVVQAKIHM (174 aa)) form the Helicase C-terminal domain.

Belongs to the DEAD box helicase family. DEAH subfamily.

The protein resides in the cytoplasm. It is found in the mitochondrion. It localises to the mitochondrion matrix. Its subcellular location is the mitochondrion nucleoid. The catalysed reaction is ATP + H2O = ADP + phosphate + H(+). Functionally, RNA-dependent helicase. Plays an important role in the assembly of the mitochondrial large ribosomal subunit. Required for optimal function of the zinc-finger antiviral protein ZC3HAV1. Associates with mitochondrial DNA. Involved in nervous system development and differentiation through its involvement in the up-regulation of a number of genes which are required for neurogenesis, including GSC, NCAM1, neurogenin, and NEUROD. This chain is ATP-dependent RNA helicase DHX30 (DHX30), found in Gallus gallus (Chicken).